A 179-amino-acid polypeptide reads, in one-letter code: MYITPEPCWAWMYHHDEDKLALELGEDWLFLSPFSARHLIPDSLHGAAFSAQHADYYNDVLDRLRKQLPNSAPEVVQIALNLTAAHFFSLPMMPKSWFFQTSAHIAYACNGKLVELDTGSERARFAVVDGGEQSSLLMLLEQSLALGNKKTMKQFELIKVMNDRLSPCQSLKHRRIVAA.

It belongs to the ZapC family. In terms of assembly, interacts directly with FtsZ.

Its subcellular location is the cytoplasm. Its function is as follows. Contributes to the efficiency of the cell division process by stabilizing the polymeric form of the cell division protein FtsZ. Acts by promoting interactions between FtsZ protofilaments and suppressing the GTPase activity of FtsZ. The chain is Cell division protein ZapC from Ferrimonas balearica (strain DSM 9799 / CCM 4581 / KCTC 23876 / PAT).